Reading from the N-terminus, the 210-residue chain is MILREQIDFLIHKRQDDNNNNGEAITDDDPFSSSSWRWGRWIFFIFFIVALLILLFSTAKVNRRRRIMGQAPIRGTAWLTPPTYRQSERDYNGTQRCVEDYVPEYTETANENDLGFYDERGEFHPNGKTEYLAPPPLSEEQASSTDKDLQRPVAAVVRIPSESEFDFNLLRPTMNNFVNGQSNRNEQHSPTVESSSFDVNNAPARAKVSK.

Residues 41–61 (WIFFIFFIVALLILLFSTAKV) traverse the membrane as a helical segment. A disordered region spans residues 125–149 (PNGKTEYLAPPPLSEEQASSTDKDL). Serine 161 is modified (phosphoserine). Residues 175–199 (NNFVNGQSNRNEQHSPTVESSSFDV) are compositionally biased toward polar residues. The segment at 175 to 210 (NNFVNGQSNRNEQHSPTVESSSFDVNNAPARAKVSK) is disordered. Threonine 191 carries the phosphothreonine modification.

It to yeast YBR005W.

It is found in the membrane. The polypeptide is Protein RCR2 (RCR2) (Saccharomyces cerevisiae (strain ATCC 204508 / S288c) (Baker's yeast)).